Here is a 145-residue protein sequence, read N- to C-terminus: Large ribosomal subunit protein uL24 (145 aa).

2 disordered regions span residues 1–21 (MKFNPFVTSDRSKNRKRHFNA) and 122–145 (KAKSRQVGKEKGKYKEETIEKMQE). Residue K136 forms a Glycyl lysine isopeptide (Lys-Gly) (interchain with G-Cter in SUMO2) linkage. The residue at position 139 (T139) is a Phosphothreonine.

Belongs to the universal ribosomal protein uL24 family. In terms of assembly, component of the large ribosomal subunit. Interacts with DHX33. Ufmylated by UFL1 in response to endoplasmic reticulum stress, promoting reticulophagy of endoplasmic reticulum sheets.

The protein localises to the cytoplasm. Component of the large ribosomal subunit. The ribosome is a large ribonucleoprotein complex responsible for the synthesis of proteins in the cell. The sequence is that of Large ribosomal subunit protein uL24 (RPL26) from Bos taurus (Bovine).